We begin with the raw amino-acid sequence, 240 residues long: Seed lectin (240 aa).

N-linked (GlcNAc...) asparagine glycosylation occurs at asparagine 111. 2 residues coordinate Mn(2+): glutamate 123 and aspartate 125. Aspartate 125, asparagine 129, and aspartate 132 together coordinate Ca(2+). Mn(2+) contacts are provided by aspartate 132 and histidine 137. An N-linked (GlcNAc...) asparagine glycan is attached at asparagine 183.

Belongs to the leguminous lectin family. Homotetramer. Partially N-glycosylated at Asn-111 and Asn-183 with the heptasaccharide [(beta-xylosyl-1,2)(alpha-mannosyl-1,6)(alpha-mannosyl-1,3)]beta-manosyl-1,4-GlcNAC-beta-1,4-GlcNAc-beta-1,4 [alpha-fucosyl-1,3]GlcNAc. A small proportion of alpha chains are proteolytically cleaved at 114-115 into gamma and beta chains. This is probably dependent on the deglycosylation of Asn-111. Seed.

Lectin that binds galactose. In Vatairea macrocarpa, this protein is Seed lectin.